Reading from the N-terminus, the 419-residue chain is Phosphatidylinositol 5-phosphate 4-kinase type-2 gamma (419 aa).

Positions 46 to 418 (ASDPLISVFM…RFLEFVTNIF (373 aa)) constitute a PIPK domain. The span at 299–310 (QEEEEDLEEDHT) shows a compositional bias: acidic residues. The segment at 299–320 (QEEEEDLEEDHTENESSPHMNV) is disordered.

Phosphorylated, phosphorylation is induced by EGF.

The protein resides in the endoplasmic reticulum. The protein localises to the cytoplasm. The catalysed reaction is a 1,2-diacyl-sn-glycero-3-phospho-(1D-myo-inositol-5-phosphate) + ATP = a 1,2-diacyl-sn-glycero-3-phospho-(1D-myo-inositol-4,5-bisphosphate) + ADP + H(+). It catalyses the reaction 1,2-dihexadecanoyl-sn-glycero-3-phospho-(1D-myo-inositol-5-phosphate) + ATP = 1,2-dihexadecanoyl-sn-glycero-3-phospho-(1D-myo-inositol-4,5-bisphosphate) + ADP + H(+). The enzyme catalyses 1,2-dihexadecanoyl-sn-glycero-3-phospho-(1D-myo-inositol-5-phosphate) + GTP = 1,2-dihexadecanoyl-sn-glycero-3-phospho-(1D-myo-inositol-4,5-bisphosphate) + GDP + H(+). Phosphatidylinositol 5-phosphate 4-kinase with low enzymatic activity. May be a GTP sensor, has higher GTP-dependent kinase activity than ATP-dependent kinase activity. This Xenopus tropicalis (Western clawed frog) protein is Phosphatidylinositol 5-phosphate 4-kinase type-2 gamma (pip4k2c).